The primary structure comprises 266 residues: Cytochrome c oxidase assembly factor 7 homolog (266 aa).

Sel1-like repeat units lie at residues 32–64 and 66–104; these read PEAC…DDYG and AKSC…NLND. Residues 166-179 show a composition bias toward low complexity; sequence AVTASSGSGTSSPP. The interval 166–187 is disordered; it reads AVTASSGSGTSSPPAGQPPLKD. One copy of the Sel1-like 3 repeat lies at 212–247; the sequence is MYACANLSQMYARGDGIEKNEKEAEKYKKLALEMQD.

This sequence belongs to the hcp beta-lactamase family.

Required for locomotion. Probably involved in the regulation of formation/maintenance of motor neurons at presynaptic terminals at the neuromuscular junction. This chain is Cytochrome c oxidase assembly factor 7 homolog, found in Drosophila melanogaster (Fruit fly).